The chain runs to 233 residues: NAD-dependent protein deacylase (233 aa).

A Deacetylase sirtuin-type domain is found at 1 to 230 (MKNIMILSGA…ALDIENFMKD (230 aa)). An NAD(+)-binding site is contributed by 9–28 (GAGLSAPSGLKTFRDNDGLW). Substrate is bound by residues Tyr53 and Arg56. 88–91 (QNVD) contacts NAD(+). Residue His106 is the Proton acceptor of the active site. Residues Cys114, Cys117, Cys133, and Cys136 each contribute to the Zn(2+) site. NAD(+) contacts are provided by residues 172–174 (GTS) and 200–202 (NLE).

This sequence belongs to the sirtuin family. Class III subfamily. Zn(2+) serves as cofactor.

The protein localises to the cytoplasm. It catalyses the reaction N(6)-acetyl-L-lysyl-[protein] + NAD(+) + H2O = 2''-O-acetyl-ADP-D-ribose + nicotinamide + L-lysyl-[protein]. The enzyme catalyses N(6)-succinyl-L-lysyl-[protein] + NAD(+) + H2O = 2''-O-succinyl-ADP-D-ribose + nicotinamide + L-lysyl-[protein]. Its function is as follows. NAD-dependent lysine deacetylase and desuccinylase that specifically removes acetyl and succinyl groups on target proteins. Modulates the activities of several proteins which are inactive in their acylated form. This chain is NAD-dependent protein deacylase, found in Campylobacter jejuni subsp. jejuni serotype O:2 (strain ATCC 700819 / NCTC 11168).